Consider the following 551-residue polypeptide: MENSSKAIVDERSGYCKSNSIFYSKREPVQLPQNHSVDVTTFISSRAHHGKIAFIDAATGRHLTFPQLWRAVDSVATCLSAMGIRKGDVILLLSPNSIYFPVVCLAVMSLGAIITTTNPLNTPREIAKQITDSKPVLAFTIPQLVSKIAGSNLPIVIIDDEVKSSLEKTLNIVSSLGEMMRKEPSPNRIGYRVNQEDTATLLYSSGTTGASKGVVSSHKNLIAMVQTILSRFGTEDGEHTFICTVPMFHIYGLAAFAMGLLSSGSTIVILSKFEIHEMLSAIEKYRATYLPLVPPILMALLKNANHIRAKYDLSSLQSVLSGGAPLSKEVIEGFVENYPTVSILQGYGLTESTGIGASTDCLQESRRYGTAGMLSPSMEAKIVNPETGEALSVNRTGELWLRGPTIMKGYFSNEEATSSTIDSEGWLRTGDLCYIDEDGFIFVVDRLKELIKYKGYQVAPAELEALLLSHPEISDAAVIPYPDKEAGQFPMAYVVRKGGSNLSESTVMDFIAKLVAPYKRIRKVAFVASIPKNPSGKILRKDLIKLATSKL.

ATP-binding positions include 204-212 (SSGTTGASK), 345-350 (QGYGLT), aspartate 431, 443-446 (VVDR), and lysine 537. Residues 274-345 (EIHEMLSAIE…ENYPTVSILQ (72 aa)) are SBD1. Residues 346-410 (GYGLTESTGI…LRGPTIMKGY (65 aa)) are SBD2.

Belongs to the ATP-dependent AMP-binding enzyme family. As to expression, mostly expressed at low levels in glandular trichomes (lupulin glands) after flowering, and, to a lower extent, in stems, leaves, cones and flowers.

It is found in the cytoplasm. The protein localises to the cytosol. The sequence is that of Probable CoA ligase CCL5 from Humulus lupulus (European hop).